A 209-amino-acid chain; its full sequence is Uracil phosphoribosyltransferase (209 aa).

Residues R79, R104, and 131-139 contribute to the 5-phospho-alpha-D-ribose 1-diphosphate site; that span reads DPMLATGGS. Residues I194 and 199–201 contribute to the uracil site; that span reads GDA. D200 lines the 5-phospho-alpha-D-ribose 1-diphosphate pocket.

Belongs to the UPRTase family. Requires Mg(2+) as cofactor.

The enzyme catalyses UMP + diphosphate = 5-phospho-alpha-D-ribose 1-diphosphate + uracil. The protein operates within pyrimidine metabolism; UMP biosynthesis via salvage pathway; UMP from uracil: step 1/1. Its activity is regulated as follows. Allosterically activated by GTP. Its function is as follows. Catalyzes the conversion of uracil and 5-phospho-alpha-D-ribose 1-diphosphate (PRPP) to UMP and diphosphate. The sequence is that of Uracil phosphoribosyltransferase from Streptococcus pneumoniae serotype 4 (strain ATCC BAA-334 / TIGR4).